A 275-amino-acid chain; its full sequence is Large ribosomal subunit protein uL2 (275 aa).

Disordered stretches follow at residues 34 to 59 (LEKKSKSGGRNNNGRITTRHIGGGHK) and 223 to 275 (VAMN…RNKK).

The protein belongs to the universal ribosomal protein uL2 family. As to quaternary structure, part of the 50S ribosomal subunit. Forms a bridge to the 30S subunit in the 70S ribosome.

One of the primary rRNA binding proteins. Required for association of the 30S and 50S subunits to form the 70S ribosome, for tRNA binding and peptide bond formation. It has been suggested to have peptidyltransferase activity; this is somewhat controversial. Makes several contacts with the 16S rRNA in the 70S ribosome. This Teredinibacter turnerae (strain ATCC 39867 / T7901) protein is Large ribosomal subunit protein uL2.